The primary structure comprises 461 residues: Serine/threonine-protein kinase 4 homolog A (461 aa).

The region spanning 20–273 (FTIVEKLGEG…AEELLKHPFI (254 aa)) is the Protein kinase domain. Residues 26–34 (LGEGSYGSV) and lysine 49 each bind ATP. Aspartate 139 functions as the Proton acceptor in the catalytic mechanism. Phosphothreonine; by autocatalysis is present on threonine 173. 2 disordered regions span residues 303 to 349 (GIEQ…EEYD) and 369 to 388 (NDDE…SNKK). A compositionally biased stretch (acidic residues) spans 307–322 (RDEEEEDEDEDSEDSD). One can recognise an SARAH domain in the interval 411 to 458 (SDKYSSYSLEELKKMLAELEIEREKEVQKTLEKFSINRQALLAVIDEK).

It belongs to the protein kinase superfamily. STE Ser/Thr protein kinase family. STE20 subfamily. Mn(2+) is required as a cofactor. Post-translationally, undergoes autophosphorylation in the catalytic domain.

The protein resides in the cytoplasm. It is found in the cytosol. The enzyme catalyses L-seryl-[protein] + ATP = O-phospho-L-seryl-[protein] + ADP + H(+). It carries out the reaction L-threonyl-[protein] + ATP = O-phospho-L-threonyl-[protein] + ADP + H(+). Functionally, regulates both cAMP signaling during early development and the stress response. Functions as an activator of adenylylcyclase. The sequence is that of Serine/threonine-protein kinase 4 homolog A (krsA) from Dictyostelium discoideum (Social amoeba).